The chain runs to 478 residues: Lysine-rich nucleolar protein 1 (478 aa).

Positions 1 to 231 are disordered; sequence MVSKTQKADL…THQEGDILLV (231 aa). Residue lysine 7 forms a Glycyl lysine isopeptide (Lys-Gly) (interchain with G-Cter in SUMO2) linkage. The segment covering 17 to 27 has biased composition (basic residues); sequence KKKKKKKKKRV. Over residues 33–45 the composition is skewed to polar residues; it reads EPETQYSVLNSND. Phosphoserine occurs at positions 51 and 59. A compositionally biased stretch (polar residues) spans 54-63; it reads RATSPSNNVD. Composition is skewed to basic residues over residues 73–82 and 120–129; these read SKRKKKKKSC and EKKKKRRKSL. Lysine 140 is covalently cross-linked (Glycyl lysine isopeptide (Lys-Gly) (interchain with G-Cter in SUMO2)). At serine 142 the chain carries Phosphoserine. Over residues 143 to 153 the composition is skewed to basic and acidic residues; that stretch reads PDPKHAKEVSK. 2 stretches are compositionally biased toward basic residues: residues 154-165 and 204-222; these read AGRKSKKQRKEK and QKRK…KKKT. Residue lysine 250 forms a Glycyl lysine isopeptide (Lys-Gly) (interchain with G-Cter in SUMO1); alternate linkage. Residue lysine 250 forms a Glycyl lysine isopeptide (Lys-Gly) (interchain with G-Cter in SUMO2); alternate linkage. The segment at 258–314 is disordered; sequence PIDSPKAPGKKKVKSKKKVEQPVGEGLAVKRKKKKKKRKENGVKEDPWQEEKEESDT. At serine 261 the chain carries Phosphoserine. Residues 265-274 are compositionally biased toward basic residues; sequence PGKKKVKSKK. Residues lysine 275 and lysine 287 each participate in a glycyl lysine isopeptide (Lys-Gly) (interchain with G-Cter in SUMO2) cross-link. Residues 286 to 296 show a composition bias toward basic residues; it reads VKRKKKKKKRK. Over residues 297 to 307 the composition is skewed to basic and acidic residues; it reads ENGVKEDPWQE. A Glycyl lysine isopeptide (Lys-Gly) (interchain with G-Cter in SUMO2) cross-link involves residue lysine 309. Residues 310 to 478 are interaction with ZNF106; that stretch reads EESDTDLEVV…NASKSIKLQD (169 aa). Serine 312 is modified (phosphoserine). Threonine 314 carries the phosphothreonine modification. Residue lysine 323 forms a Glycyl lysine isopeptide (Lys-Gly) (interchain with G-Cter in SUMO2) linkage. Positions 340-357 are enriched in basic and acidic residues; it reads QEEIDRESGKTEASEPKK. The segment at 340 to 378 is disordered; that stretch reads QEEIDRESGKTEASEPKKWTVGLSVKTEASEPKKWTGTQ. Glycyl lysine isopeptide (Lys-Gly) (interchain with G-Cter in SUMO2) cross-links involve residues lysine 373, lysine 393, lysine 395, lysine 427, and lysine 462.

In terms of assembly, interacts with ZNF106. In terms of tissue distribution, expressed in testis.

The protein resides in the nucleus. Its subcellular location is the nucleolus. The protein is Lysine-rich nucleolar protein 1 (Knop1) of Mus musculus (Mouse).